The sequence spans 433 residues: Chitinase-like protein EN03 (433 aa).

An N-terminal signal peptide occupies residues 1 to 16; that stretch reads MKLFIALVGLLALAKA. The GH18 domain maps to 23 to 433; it reads SKVLCYYDSR…PILRAAKYRL (411 aa). Residues Cys27 and Cys54 are joined by a disulfide bond. The N-linked (GlcNAc...) asparagine glycan is linked to Asn220. Cys337 and Cys418 are joined by a disulfide.

The protein belongs to the glycosyl hydrolase 18 family. IDGF subfamily.

It localises to the secreted. This chain is Chitinase-like protein EN03, found in Bombyx mori (Silk moth).